Consider the following 186-residue polypeptide: ADP-ribosylation factor-like protein DDB_G0292332 (186 aa).

GTP is bound by residues 24–31 (GVENVGKT), 78–82 (DIGGK), and 138–141 (NKQD).

It belongs to the small GTPase superfamily. Arf family.

In terms of biological role, binds and exchanges GTP and GDP. The polypeptide is ADP-ribosylation factor-like protein DDB_G0292332 (Dictyostelium discoideum (Social amoeba)).